A 1167-amino-acid polypeptide reads, in one-letter code: Nucleolar protein 8 (1167 aa).

One can recognise an RRM domain in the interval 8-89 (KRLYVGGLSQ…GTLQIQLAKE (82 aa)). The segment at 223-304 (VQKDESSTGS…NSISDDDTDS (82 aa)) is disordered. A Glycyl lysine isopeptide (Lys-Gly) (interchain with G-Cter in SUMO2) cross-link involves residue K225. Residues 248–275 (LTQQQAAQKRTCDSITPSKSSPVPVSDT) show a composition bias toward polar residues. Residues S268 and S298 each carry the phosphoserine modification. T302 carries the phosphothreonine modification. Phosphoserine is present on S304. K314 is covalently cross-linked (Glycyl lysine isopeptide (Lys-Gly) (interchain with G-Cter in SUMO2)). 2 positions are modified to phosphoserine: S331 and S365. Y376 bears the Phosphotyrosine mark. Position 378 is a phosphoserine (S378). A Phosphothreonine modification is found at T381. S432 bears the Phosphoserine mark. Disordered regions lie at residues 435 to 470 (ESALSHGLKSLNRKSPSHSSSSEDADSASELADSEG), 499 to 533 (LKVPNEDTKSDGPETTTQCKFDRGSKSPKTPTGLR), 590 to 908 (KDSV…EEEL), 932 to 982 (NRGS…AEKL), and 1006 to 1026 (YTSEKEEGTPWNEDCGKEKPE). The span at 457–470 (EDADSASELADSEG) shows a compositional bias: acidic residues. Residues 501–510 (VPNEDTKSDG) show a composition bias toward basic and acidic residues. Positions 640 to 652 (NYIQPQKRQTTFE) are enriched in polar residues. Over residues 653–668 (SQDRKAVSPSSSEKRS) the composition is skewed to basic and acidic residues. S723 is modified (phosphoserine). Positions 727–736 (SSKDTREIKT) are enriched in basic and acidic residues. Residues 738-748 (FSLSISNSSDV) are compositionally biased toward polar residues. Over residues 749–776 (SAKDKHAEDNEKRLAALEARQKAKEVQK) the composition is skewed to basic and acidic residues. Residues 753–779 (KHAEDNEKRLAALEARQKAKEVQKKLV) are a coiled coil. T795 carries the post-translational modification Phosphothreonine. Position 801 is a phosphoserine (S801). Basic and acidic residues predominate over residues 817-827 (HPGEEWVKESM). Phosphoserine is present on residues S837, S838, S843, and S845. Residues 837-847 (SSDDDESDSED) are compositionally biased toward acidic residues. Positions 874-887 (GTDDRFRMDSRFLE) are enriched in basic and acidic residues. Residues 886–924 (LETDSEEEQEEVNEKKTAEEEELAEEKKKALNVVQSVLQ) adopt a coiled-coil conformation. Residue T888 is modified to Phosphothreonine. S890 bears the Phosphoserine mark. Basic and acidic residues-rich tracts occupy residues 940–968 (KFKDIIHYDPTKQDHATYERKRDDKPKES) and 1007–1026 (TSEKEEGTPWNEDCGKEKPE). S1036 carries the phosphoserine modification. K1057 participates in a covalent cross-link: Glycyl lysine isopeptide (Lys-Gly) (interchain with G-Cter in SUMO2). Disordered stretches follow at residues 1071 to 1105 (IVWQEDPRLQDSSSEEEDVTEETDHRNSSPGEASL) and 1145 to 1167 (RTTNLRMDCRKKHKDAKRKMKPK). Residues S1082, S1083, S1084, and S1099 each carry the phosphoserine modification. Positions 1153–1167 (CRKKHKDAKRKMKPK) are enriched in basic residues.

Interacts with the GTP form of RRAGA, RRAGC and RRAGD. Interacts with NIP7. Interacts with DDX18; the interaction is RNA-dependent. Interacts with DDX47; the interaction is RNA-dependent. Phosphorylated. As to expression, expressed in various diffuse-type gastric cancers. Detected at lower levels in skeletal muscle.

The protein localises to the nucleus. Its subcellular location is the nucleolus. In terms of biological role, plays an essential role in the survival of diffuse-type gastric cancer cells. Acts as a nucleolar anchoring protein for DDX47. May be involved in regulation of gene expression at the post-transcriptional level or in ribosome biogenesis in cancer cells. In Homo sapiens (Human), this protein is Nucleolar protein 8.